A 224-amino-acid polypeptide reads, in one-letter code: UPF0758 protein PFLU_5982 (224 aa).

Residues 102-224 (VLESPKAVRD…PLSMAEYGWL (123 aa)) enclose the MPN domain. Zn(2+) is bound by residues His-173, His-175, and Asp-186. A JAMM motif motif is present at residues 173 to 186 (HNHPSGSLEPSAAD).

It belongs to the UPF0758 family.

This Pseudomonas fluorescens (strain SBW25) protein is UPF0758 protein PFLU_5982.